Here is a 390-residue protein sequence, read N- to C-terminus: Flap endonuclease 1-2 (390 aa).

The segment at 1 to 108 (MGIHQLMQFL…GELARRKKLK (108 aa)) is N-domain. Asp-34 contacts Mg(2+). Position 74 (Arg-74) interacts with DNA. Residues Asp-90, Glu-162, Glu-164, Asp-183, and Asp-185 each contribute to the Mg(2+) site. Residues 126 to 254 (QALLQNQRTT…GTAYKLIKEY (129 aa)) form an I-domain region. A DNA-binding site is contributed by Glu-162. Gly-232 and Asp-234 together coordinate DNA. Asp-234 lines the Mg(2+) pocket. Positions 348 to 356 (FQSRLENFF) are interaction with PCNA. The segment at 359–390 (TTKIIHPNNSKAKAKSNKKTEQPQKSGGKKKI) is disordered.

The protein belongs to the XPG/RAD2 endonuclease family. FEN1 subfamily. In terms of assembly, interacts with PCNA. Three molecules of FEN1 bind to one PCNA trimer with each molecule binding to one PCNA monomer. PCNA stimulates the nuclease activity without altering cleavage specificity. It depends on Mg(2+) as a cofactor. Phosphorylated. Phosphorylation upon DNA damage induces relocalization to the nuclear plasma.

Its subcellular location is the nucleus. The protein localises to the nucleolus. The protein resides in the nucleoplasm. It is found in the mitochondrion. Its function is as follows. Structure-specific nuclease with 5'-flap endonuclease and 5'-3' exonuclease activities involved in DNA replication and repair. During DNA replication, cleaves the 5'-overhanging flap structure that is generated by displacement synthesis when DNA polymerase encounters the 5'-end of a downstream Okazaki fragment. It enters the flap from the 5'-end and then tracks to cleave the flap base, leaving a nick for ligation. Also involved in the long patch base excision repair (LP-BER) pathway, by cleaving within the apurinic/apyrimidinic (AP) site-terminated flap. Acts as a genome stabilization factor that prevents flaps from equilibrating into structures that lead to duplications and deletions. Also possesses 5'-3' exonuclease activity on nicked or gapped double-stranded DNA, and exhibits RNase H activity. Also involved in replication and repair of rDNA and in repairing mitochondrial DNA. This is Flap endonuclease 1-2 from Paramecium tetraurelia.